Here is a 375-residue protein sequence, read N- to C-terminus: Neuropeptide Y receptor type 4-2 (375 aa).

Topologically, residues 1–39 are extracellular; the sequence is MNTSHLLALLLPKSPQGENRSKPLGTPYNFSEHCQDSVD. Asn2, Asn19, and Asn29 each carry an N-linked (GlcNAc...) asparagine glycan. A helical transmembrane segment spans residues 40–60; sequence VMVFIVTSYSIETVVGVLGNL. At 61–87 the chain is on the cytoplasmic side; the sequence is CLMCVTVRQKEKANVTNLLIANLAFSD. A helical membrane pass occupies residues 88-108; the sequence is FLMCLLCQPLTAVYTIMDYWI. The Extracellular portion of the chain corresponds to 109-116; the sequence is FGETLCKM. Cys114 and Cys201 are joined by a disulfide. Residues 117–137 form a helical membrane-spanning segment; sequence SAFIQCMSVTVSILSLVLVAL. Topologically, residues 138–155 are cytoplasmic; that stretch reads ERHQLIINPTGWKPSISQ. Residues 156 to 176 form a helical membrane-spanning segment; it reads AYLGIVLIWVIACVLSLPFLA. Residues 177–212 are Extracellular-facing; that stretch reads NSILENVFHKNHSKALEFLADKVVCTESWPLAHHRT. N-linked (GlcNAc...) asparagine glycosylation is present at Asn187. A helical transmembrane segment spans residues 213-233; it reads IYTTFLLLFQYCLPLGFILVC. Over 234–263 the chain is Cytoplasmic; that stretch reads YARIYRRLQRQGRVFHKGTYSLRAGHMKQV. A helical transmembrane segment spans residues 264–284; that stretch reads NVVLVVMVVAFAVLWLPLHVF. Topologically, residues 285–301 are extracellular; it reads NSLEDWHHEAIPICHGN. A helical transmembrane segment spans residues 302–322; the sequence is LIFLVCHLLAMASTCVNPFIY. At 323-375 the chain is on the cytoplasmic side; it reads GFLNTNFKKEIKALVLTCQQSAPLEESEHLPLSTVHTEVSKGSLRLSGRSNPI. Cys340 carries S-palmitoyl cysteine lipidation.

This sequence belongs to the G-protein coupled receptor 1 family.

The protein localises to the cell membrane. Its function is as follows. G protein-coupled receptor for PPY/pancreatic polypeptide/PP, NPY/neuropeptide Y and PYY/peptide YY that is negatively coupled to cAMP. The rank order of affinity for these polypeptides and their derivatives is PP, PP (2-36) and [Ile-31, Gln-34] PP &gt; [Pro-34] PYY &gt; PYY and [Leu-31, Pro-34] NPY &gt; NPY &gt; PYY (3-36) and NPY (2-36) &gt; PP (13-36) &gt; PP (31-36) &gt; NPY free acid. The polypeptide is Neuropeptide Y receptor type 4-2 (Homo sapiens (Human)).